The primary structure comprises 749 residues: G-type lectin S-receptor-like serine/threonine-protein kinase At1g61460 (749 aa).

The signal sequence occupies residues Met-1–Ala-25. Positions Gly-26–Phe-145 constitute a Bulb-type lectin domain. Over Gly-26–Thr-392 the chain is Extracellular. Residues Asn-54, Asn-95, Asn-118, and Asn-135 are each glycosylated (N-linked (GlcNAc...) asparagine). The EGF-like; atypical domain occupies Pro-247–Glu-280. 2 cysteine pairs are disulfide-bonded: Cys-251/Cys-263 and Cys-257/Cys-268. N-linked (GlcNAc...) asparagine glycosylation is found at Asn-286, Asn-302, and Asn-341. A PAN domain is found at Cys-299–Arg-381. Cystine bridges form between Cys-334–Cys-355 and Cys-338–Cys-344. A helical transmembrane segment spans residues Ile-393–Phe-413. Topologically, residues Trp-414 to Arg-749 are cytoplasmic. One can recognise a Protein kinase domain in the interval Phe-454–Phe-721. Residues Leu-460–Val-468 and Lys-482 contribute to the ATP site. The caM-binding stretch occupies residues Arg-543 to Ile-560. Asp-579 functions as the Proton acceptor in the catalytic mechanism.

The protein belongs to the protein kinase superfamily. Ser/Thr protein kinase family.

Its subcellular location is the cell membrane. It carries out the reaction L-seryl-[protein] + ATP = O-phospho-L-seryl-[protein] + ADP + H(+). It catalyses the reaction L-threonyl-[protein] + ATP = O-phospho-L-threonyl-[protein] + ADP + H(+). The chain is G-type lectin S-receptor-like serine/threonine-protein kinase At1g61460 from Arabidopsis thaliana (Mouse-ear cress).